Reading from the N-terminus, the 210-residue chain is Ovomucoid (210 aa).

The first 24 residues, 1–24, serve as a signal peptide directing secretion; that stretch reads MAMAGVFVLFSFVLCGFLPDAAFG. Kazal-like domains lie at 25–88, 89–153, and 156–210; these read AEVD…ECKE, TVPM…GCRK, and AAVS…FGKC. Intrachain disulfides connect C29–C68, C46–C65, and C54–C86. N34 carries N-linked (GlcNAc...) asparagine glycosylation. N-linked (GlcNAc...) asparagine glycans are attached at residues N77, N93, and N99. 6 disulfides stabilise this stretch: C94-C133, C111-C130, C119-C151, C162-C192, C170-C189, and C178-C210. N-linked (GlcNAc...) asparagine; partial glycosylation occurs at N199.

The protein resides in the secreted. Functionally, serine protease inhibitor. Inhibits trypsin. The sequence is that of Ovomucoid from Gallus gallus (Chicken).